The sequence spans 348 residues: MNGTEGPNFYVPFSNKTGVVRSPFEAPQYYLAEPWQFSMLAAYMFLLIMLGFPINFLTLYVTVQHKKLRTPLNYILLNLAVADLFMVFGGFTTTLYTSLHGYFVFGPTGCNLEGFFATLGGEIALWSLVVLAIERYVVVCKPMSNFRFGENHAIMGVAFTWVMALACAAPPLVGWSRYIPEGMQCSCGIDYYTPHEETNNESFVIYMFVVHFIIPLIVIFFCYGQLVFTVKEAAAQQQESATTQKAEKEVTRMVIIMVIAFLICWLPYAGVAFYIFTHQGSDFGPIFMTIPAFFAKTSAVYNPVIYIMMNKQFRNCMVTTLCCGKNPLGDDEASTTVSKTETSQVAPA.

Position 1 is an N-acetylmethionine (M1). At 1 to 36 (MNGTEGPNFYVPFSNKTGVVRSPFEAPQYYLAEPWQ) the chain is on the extracellular side. Residues N2 and N15 are each glycosylated (N-linked (GlcNAc...) asparagine). Residues 37 to 61 (FSMLAAYMFLLIMLGFPINFLTLYV) form a helical membrane-spanning segment. Residues 62-73 (TVQHKKLRTPLN) lie on the Cytoplasmic side of the membrane. The helical transmembrane segment at 74-96 (YILLNLAVADLFMVFGGFTTTLY) threads the bilayer. The Extracellular segment spans residues 97–110 (TSLHGYFVFGPTGC). C110 and C187 are joined by a disulfide. A helical transmembrane segment spans residues 111 to 133 (NLEGFFATLGGEIALWSLVVLAI). The 'Ionic lock' involved in activated form stabilization signature appears at 134–136 (ERY). Residues 134–152 (ERYVVVCKPMSNFRFGENH) lie on the Cytoplasmic side of the membrane. Residues 153–173 (AIMGVAFTWVMALACAAPPLV) form a helical membrane-spanning segment. Residues 174–202 (GWSRYIPEGMQCSCGIDYYTPHEETNNES) are Extracellular-facing. E201 serves as a coordination point for Zn(2+). Residues 203 to 224 (FVIYMFVVHFIIPLIVIFFCYG) form a helical membrane-spanning segment. At 225–252 (QLVFTVKEAAAQQQESATTQKAEKEVTR) the chain is on the cytoplasmic side. A helical membrane pass occupies residues 253 to 274 (MVIIMVIAFLICWLPYAGVAFY). The Extracellular portion of the chain corresponds to 275-286 (IFTHQGSDFGPI). Q279 is a Zn(2+) binding site. Residues 287–308 (FMTIPAFFAKTSAVYNPVIYIM) form a helical membrane-spanning segment. At K296 the chain carries N6-(retinylidene)lysine. The Cytoplasmic segment spans residues 309–348 (MNKQFRNCMVTTLCCGKNPLGDDEASTTVSKTETSQVAPA). Residues C322 and C323 are each lipidated (S-palmitoyl cysteine). The tract at residues 330–348 (DDEASTTVSKTETSQVAPA) is interaction with SAG. Position 334 is a phosphoserine (S334). A phosphothreonine mark is found at T335 and T336. The residue at position 338 (S338) is a Phosphoserine. Phosphothreonine is present on residues T340 and T342. S343 is subject to Phosphoserine; by RK and GRK7.

This sequence belongs to the G-protein coupled receptor 1 family. Opsin subfamily. As to quaternary structure, homodimer. May form a complex composed of RHO, GRK1 and RCVRN in a Ca(2+)-dependent manner; RCVRN prevents the interaction between GRK1 and RHO. Interacts with GRK1. Interacts (phosphorylated form) with SAG. Interacts with GNAT1. Interacts with GNAT3. SAG and G-proteins compete for a common binding site. Interacts with PRCD; the interaction promotes PRCD stability. Forms a complex with ASAP1 and ARF4. Forms a complex with ASAP1, RAB11A, Rabin8/RAB3IP, ARF4 and RAB11FIP3; the complex regulates Golgi-to-cilia rhodopsin/RHO transport in photoreceptors. Phosphorylated on some or all of the serine and threonine residues present in the C-terminal region. Post-translationally, contains one covalently linked retinal chromophore. Upon light absorption, the covalently bound 11-cis-retinal is converted to all-trans-retinal. After hydrolysis of the Schiff base and release of the covalently bound all-trans-retinal, active rhodopsin is regenerated by binding of a fresh molecule of 11-cis-retinal. As to expression, expressed in rod-shaped photoreceptor cells in the retina that mediate vision in dim light (at protein level).

The protein localises to the membrane. It is found in the cell projection. The protein resides in the cilium. Its subcellular location is the photoreceptor outer segment. Photoreceptor required for image-forming vision at low light intensity. Required for photoreceptor cell viability after birth. Light-induced isomerization of 11-cis to all-trans retinal triggers a conformational change that activates signaling via G-proteins. Subsequent receptor phosphorylation mediates displacement of the bound G-protein alpha subunit by the arrestin SAG and terminates signaling. The chain is Rhodopsin (RHO) from Bos taurus (Bovine).